The primary structure comprises 410 residues: Putative competence-damage inducible protein (410 aa).

The protein belongs to the CinA family.

The sequence is that of Putative competence-damage inducible protein from Clostridium kluyveri (strain NBRC 12016).